The primary structure comprises 176 residues: Parathyroid hormone-related protein (176 aa).

The N-terminal stretch at 1-25 (MMFTKLFQQWSFAVFLLSYSVPSYG) is a signal peptide. Residues 26 to 37 (RSVEGISRRLKR) constitute a propeptide that is removed on maturation. The interval 58–69 (RIFLQNLIEGVN) is important for receptor binding. The disordered stretch occupies residues 76–157 (TSEVSPNPKP…WLNSGMYGSN (82 aa)). 2 stretches are compositionally biased toward polar residues: residues 77 to 91 (SEVSPNPKPATNTKN) and 106 to 116 (TQETNKSQTYK). A Nuclear localization signal motif is present at residues 109–130 (TNKSQTYKEQPLKVSGKKKKAK). Positions 123-133 (SGKKKKAKPGK) are enriched in basic residues.

Belongs to the parathyroid hormone family.

Its subcellular location is the secreted. The protein resides in the cytoplasm. It localises to the nucleus. Its function is as follows. Neuroendocrine peptide which is a critical regulator of cellular and organ growth, development, migration, differentiation and survival and of epithelial calcium ion transport. Acts by binding to its receptor, PTH1R, activating G protein-coupled receptor signaling. Regulates endochondral bone development and epithelial-mesenchymal interactions during the formation of the mammary glands and teeth. Required for skeletal homeostasis. Potent inhibitor of osteoclastic bone resorption. The polypeptide is Parathyroid hormone-related protein (PTHLH) (Gallus gallus (Chicken)).